We begin with the raw amino-acid sequence, 297 residues long: Ribosomal RNA small subunit methyltransferase H (297 aa).

S-adenosyl-L-methionine-binding positions include 36-38 (GGH), D56, L90, D104, and H111.

Belongs to the methyltransferase superfamily. RsmH family.

It is found in the cytoplasm. It carries out the reaction cytidine(1402) in 16S rRNA + S-adenosyl-L-methionine = N(4)-methylcytidine(1402) in 16S rRNA + S-adenosyl-L-homocysteine + H(+). Its function is as follows. Specifically methylates the N4 position of cytidine in position 1402 (C1402) of 16S rRNA. This Dictyoglomus thermophilum (strain ATCC 35947 / DSM 3960 / H-6-12) protein is Ribosomal RNA small subunit methyltransferase H.